We begin with the raw amino-acid sequence, 245 residues long: Bax inhibitor 1 (245 aa).

Residues 1–30 (MADTANYINDRFQTFMNGLGDRYEPYVREH) lie on the Cytoplasmic side of the membrane. The helical transmembrane segment at 31-51 (LSKVYMVLGSTAAATAMGAML) threads the bilayer. Over 52 to 55 (QMRD) the chain is Lumenal. A helical transmembrane segment spans residues 56–76 (FLDLGVLAAVATLVLVLGLHF). Over 77 to 88 (YKDDGKNYYTRL) the chain is Cytoplasmic. Residues 89–109 (GMLYAFGFCSGQTLGPLLGYI) form a helical membrane-spanning segment. The Lumenal portion of the chain corresponds to 110–115 (CSINPA). Residues 116–136 (IILSALTGTFVTFISLSLSAL) form a helical membrane-spanning segment. Topologically, residues 137–142 (LAEQGK) are cytoplasmic. The chain crosses the membrane as a helical span at residues 143 to 163 (YLYLGGMLVSVINTMALLSLF). Residues 164–169 (NMVFKS) lie on the Lumenal side of the membrane. The helical transmembrane segment at 170-190 (YFVQVTQLYVGVFVMAAFIVY) threads the bilayer. Topologically, residues 191-245 (DTQNIVEKCRNGNRDVVQHALDLFFDVLSMFRRLLIILTQKEERKQNERRQNKTK) are cytoplasmic.

Belongs to the BI1 family.

Its subcellular location is the endoplasmic reticulum membrane. Suppressor of apoptosis. Modulates unfolded protein response signaling. Negatively regulates autophagy and autophagosome formation, especially during periods of nutrient deprivation, and reduces cell survival during starvation. The polypeptide is Bax inhibitor 1 (Drosophila melanogaster (Fruit fly)).